The primary structure comprises 514 residues: MQQLNPSEISEIIKGRIDNLDVSSQARNEGTVVSVSDGIVRIHGLADVMYGEMIEFPGGVYGMALNLEQDSVGAVILGAYDTLAEGMSAKCTGRILEVPVGKELLGRVVDALGNPIDGKGPLGNTQTDAVEKVAPGVIWRKSVDQPVQTGYKSVDAMIPVGRGQRELIIGDRQIGKTAMAIDAIINQKNSGIFCVYVAVGQKRSTVANIVRKLEETGALANTIVVVASASESAALQFLAPYAGCTMGEFFRDRGEDALIVYDDLSKQAVAYRQISLLLRRPPGREAYPGDVFYLHSRLLERASRVSEEYVEKFTNGAVTGKTGSLTALPIIETQAGDVSAFVPTNVISITDGQIFLESAMFNSGIRPAVNAGVSVSRVGGAAQTKIIKKLSGGIRTALAQYRELAAFAQFASDLDEATRKQLEHGQRVTELMKQKQYAPMSIADMALSLYAAERGFLIDVEVSKIGSFEQALIAFFNRDHAELMAKINVKGDFNDEIDAGLKAGIEKFKATQTW.

170–177 (GDRQIGKT) contacts ATP.

Belongs to the ATPase alpha/beta chains family. In terms of assembly, F-type ATPases have 2 components, CF(1) - the catalytic core - and CF(0) - the membrane proton channel. CF(1) has five subunits: alpha(3), beta(3), gamma(1), delta(1), epsilon(1). CF(0) has three main subunits: a(1), b(2) and c(9-12). The alpha and beta chains form an alternating ring which encloses part of the gamma chain. CF(1) is attached to CF(0) by a central stalk formed by the gamma and epsilon chains, while a peripheral stalk is formed by the delta and b chains.

The protein resides in the cell inner membrane. The enzyme catalyses ATP + H2O + 4 H(+)(in) = ADP + phosphate + 5 H(+)(out). Its function is as follows. Produces ATP from ADP in the presence of a proton gradient across the membrane. The alpha chain is a regulatory subunit. This chain is ATP synthase subunit alpha, found in Pseudomonas putida (strain ATCC 700007 / DSM 6899 / JCM 31910 / BCRC 17059 / LMG 24140 / F1).